Consider the following 253-residue polypeptide: Probable transcriptional regulatory protein SynRCC307_1833 (253 aa).

This sequence belongs to the TACO1 family.

It is found in the cytoplasm. The chain is Probable transcriptional regulatory protein SynRCC307_1833 from Synechococcus sp. (strain RCC307).